Reading from the N-terminus, the 340-residue chain is Ketol-acid reductoisomerase (NADP(+)) (340 aa).

A KARI N-terminal Rossmann domain is found at 3-182 (VQMEYEKDVK…GAARVGLLET (180 aa)). NADP(+)-binding positions include 26 to 29 (YGSQ), arginine 49, serine 53, and 83 to 86 (DEIQ). The active site involves histidine 108. Position 134 (glycine 134) interacts with NADP(+). One can recognise a KARI C-terminal knotted domain in the interval 183–328 (TYKEETEEDL…AELRKAMPFV (146 aa)). Mg(2+)-binding residues include aspartate 191, glutamate 195, glutamate 227, and glutamate 231. Substrate is bound at residue serine 252.

It belongs to the ketol-acid reductoisomerase family. Mg(2+) serves as cofactor.

The catalysed reaction is (2R)-2,3-dihydroxy-3-methylbutanoate + NADP(+) = (2S)-2-acetolactate + NADPH + H(+). It catalyses the reaction (2R,3R)-2,3-dihydroxy-3-methylpentanoate + NADP(+) = (S)-2-ethyl-2-hydroxy-3-oxobutanoate + NADPH + H(+). It functions in the pathway amino-acid biosynthesis; L-isoleucine biosynthesis; L-isoleucine from 2-oxobutanoate: step 2/4. The protein operates within amino-acid biosynthesis; L-valine biosynthesis; L-valine from pyruvate: step 2/4. Its function is as follows. Involved in the biosynthesis of branched-chain amino acids (BCAA). Catalyzes an alkyl-migration followed by a ketol-acid reduction of (S)-2-acetolactate (S2AL) to yield (R)-2,3-dihydroxy-isovalerate. In the isomerase reaction, S2AL is rearranged via a Mg-dependent methyl migration to produce 3-hydroxy-3-methyl-2-ketobutyrate (HMKB). In the reductase reaction, this 2-ketoacid undergoes a metal-dependent reduction by NADPH to yield (R)-2,3-dihydroxy-isovalerate. This is Ketol-acid reductoisomerase (NADP(+)) from Streptococcus thermophilus (strain ATCC BAA-491 / LMD-9).